Reading from the N-terminus, the 448-residue chain is Beta-alanine--pyruvate aminotransferase (448 aa).

Tryptophan 61 lines the substrate pocket. Residue 120–121 coordinates pyridoxal 5'-phosphate; that stretch reads GS. Lysine 288 bears the N6-(pyridoxal phosphate)lysine mark. Threonine 327 contributes to the pyridoxal 5'-phosphate binding site. Substrate contacts are provided by arginine 414 and glutamine 421.

This sequence belongs to the class-III pyridoxal-phosphate-dependent aminotransferase family. In terms of assembly, homotetramer. Requires pyridoxal 5'-phosphate as cofactor.

The enzyme catalyses 3-oxopropanoate + L-alanine = beta-alanine + pyruvate. With respect to regulation, inhibited by gabaculine (5-amino-1,3-cyclohexadienylcarboxylic acid). Functionally, involved in the degradation of beta-alanine. Catalyzes the transfer of the amino group from beta-alanine to pyruvate to yield L-alanine and 3-oxopropanoate. It can also accept both 4-aminobutyrate and (S)-alpha-methylbenzylamine (MBA) as amino-group donors in the presence of pyruvate as an amine acceptor. This is Beta-alanine--pyruvate aminotransferase (bauA) from Pseudomonas aeruginosa (strain ATCC 15692 / DSM 22644 / CIP 104116 / JCM 14847 / LMG 12228 / 1C / PRS 101 / PAO1).